Here is a 148-residue protein sequence, read N- to C-terminus: 3-hydroxyacyl-[acyl-carrier-protein] dehydratase FabZ (148 aa).

The active site involves His48.

This sequence belongs to the thioester dehydratase family. FabZ subfamily.

The protein localises to the cytoplasm. It catalyses the reaction a (3R)-hydroxyacyl-[ACP] = a (2E)-enoyl-[ACP] + H2O. Involved in unsaturated fatty acids biosynthesis. Catalyzes the dehydration of short chain beta-hydroxyacyl-ACPs and long chain saturated and unsaturated beta-hydroxyacyl-ACPs. The sequence is that of 3-hydroxyacyl-[acyl-carrier-protein] dehydratase FabZ from Campylobacter curvus (strain 525.92).